Consider the following 432-residue polypeptide: Pentatricopeptide repeat-containing protein 2, mitochondrial (432 aa).

A mitochondrion-targeting transit peptide spans 1-33; sequence MQFIKRTFPRRAFVDLLLNRFCLREFATTYSVS. 4 PPR repeats span residues 108–142, 143–179, 360–394, and 395–429; these read KTVA…QQKP, SDHT…VTAS, NLQV…GPFP, and TQQT…NVPV.

It localises to the mitochondrion. Its function is as follows. Mitochondrial RNA-binding protein that acts as a general translation factor. Plays a critical role in the synthesis of all mitochondrial DNA-encoded oxidative phosphorylation subunits, which are essential for mitochondrial respiration. Essential for the expression of iron-sulfur cluster (ISC) proteins as well as other heme proteins related to iron-sensing, and thus plays a key role in iron homeostasis. In Schizosaccharomyces pombe (strain 972 / ATCC 24843) (Fission yeast), this protein is Pentatricopeptide repeat-containing protein 2, mitochondrial.